The sequence spans 297 residues: Tyrosine recombinase XerD (297 aa).

The region spanning Lys-2–Cys-86 is the Core-binding (CB) domain. Positions Gln-107–Lys-291 constitute a Tyr recombinase domain. Residues Arg-147, Lys-171, His-243, Arg-246, and His-269 contribute to the active site. Catalysis depends on Tyr-278, which acts as the O-(3'-phospho-DNA)-tyrosine intermediate.

Belongs to the 'phage' integrase family. XerD subfamily. Forms a cyclic heterotetrameric complex composed of two molecules of XerC and two molecules of XerD.

It is found in the cytoplasm. Its function is as follows. Site-specific tyrosine recombinase, which acts by catalyzing the cutting and rejoining of the recombining DNA molecules. The XerC-XerD complex is essential to convert dimers of the bacterial chromosome into monomers to permit their segregation at cell division. It also contributes to the segregational stability of plasmids. The protein is Tyrosine recombinase XerD of Haemophilus ducreyi (strain 35000HP / ATCC 700724).